The following is a 550-amino-acid chain: Eukaryotic translation initiation factor 3 subunit D-2 (550 aa).

The interval 108–152 (RTRGRTGRGTPNIASLGGSTAGGATASTTKYGKGRHTRNTQNVGR) is disordered. Low complexity predominate over residues 115 to 136 (RGTPNIASLGGSTAGGATASTT). An RNA gate region spans residues 290–304 (QFDLLTVNETSVEPP). Residues 527–550 (PENAFDSDRDEEESSEPLSNSNDN) form a disordered region.

The protein belongs to the eIF-3 subunit D family. As to quaternary structure, component of the eukaryotic translation initiation factor 3 (eIF-3) complex. The eIF-3 complex interacts with pix.

The protein resides in the cytoplasm. In terms of biological role, mRNA cap-binding component of the eukaryotic translation initiation factor 3 (eIF-3) complex, which is involved in protein synthesis of a specialized repertoire of mRNAs and, together with other initiation factors, stimulates binding of mRNA and methionyl-tRNAi to the 40S ribosome. The eIF-3 complex specifically targets and initiates translation of a subset of mRNAs involved in cell proliferation. In the eIF-3 complex, eif3d specifically recognizes and binds the 7-methylguanosine cap of a subset of mRNAs. This Drosophila sechellia (Fruit fly) protein is Eukaryotic translation initiation factor 3 subunit D-2.